Consider the following 127-residue polypeptide: Gamma-synuclein (127 aa).

2 tandem repeats follow at residues 20-30 and 31-41. Positions 20 to 67 are 4 X 11 AA tandem repeats of [EGSA]-K-T-K-[EQ]-[GQ]-V-X(4); sequence EKTKQGVTEAAEKTKEGVMYVGAKTKEGVVQSVTSVAEKTKEQANAVS. One copy of the 3; approximate repeat lies at 42-56; it reads AKTKEGVVQSVTSVA. Repeat unit 4 spans residues 57 to 67; sequence EKTKEQANAVS. Residues serine 67, serine 72, and serine 124 each carry the phosphoserine modification. Residues 99 to 127 are disordered; the sequence is ALKQPVPSQEDEAAKAEEQVAEETKSGGD. Over residues 110–127 the composition is skewed to basic and acidic residues; that stretch reads EAAKAEEQVAEETKSGGD.

Belongs to the synuclein family. May be a centrosome-associated protein. Interacts with MYOC; affects its secretion and its aggregation. Post-translationally, phosphorylated by BARK1 and GRK5. In terms of tissue distribution, predominantly expressed in retina (predominantly in outer nuclear layer, also in inner segment of photoreceptor cells, some individual cells located in the inner nuclear layer, inner plexiform layer and in nerve fiber layer). Also found in brain and heart.

Its subcellular location is the cytoplasm. The protein localises to the perinuclear region. The protein resides in the cytoskeleton. It localises to the microtubule organizing center. It is found in the centrosome. Its subcellular location is the spindle. Functionally, plays a role in neurofilament network integrity. May be involved in modulating axonal architecture during development and in the adult. In vitro, increases the susceptibility of neurofilament-H to calcium-dependent proteases. May also function in modulating the keratin network in skin. Activates the MAPK and Elk-1 signal transduction pathway. This chain is Gamma-synuclein (SNCG), found in Bos taurus (Bovine).